A 161-amino-acid chain; its full sequence is Ribonuclease H (161 aa).

Residues 2–141 (TNNEIIAATD…ADSLARQAAN (140 aa)) enclose the RNase H type-1 domain. The Mg(2+) site is built by aspartate 11, glutamate 46, aspartate 69, and aspartate 133.

Belongs to the RNase H family. As to quaternary structure, monomer. Mg(2+) serves as cofactor.

The protein localises to the cytoplasm. It catalyses the reaction Endonucleolytic cleavage to 5'-phosphomonoester.. Endonuclease that specifically degrades the RNA of RNA-DNA hybrids. This chain is Ribonuclease H, found in Tropheryma whipplei (strain TW08/27) (Whipple's bacillus).